The primary structure comprises 131 residues: Large ribosomal subunit protein bL12c (131 aa).

Belongs to the bacterial ribosomal protein bL12 family. Homodimer. Part of the ribosomal stalk of the 50S ribosomal subunit. Forms a multimeric L10(L12)X complex, where L10 forms an elongated spine to which 2 to 4 L12 dimers bind in a sequential fashion. Binds GTP-bound translation factors.

Its subcellular location is the plastid. The protein localises to the chloroplast. In terms of biological role, forms part of the ribosomal stalk which helps the ribosome interact with GTP-bound translation factors. Is thus essential for accurate translation. The sequence is that of Large ribosomal subunit protein bL12c from Euglena gracilis.